Consider the following 263-residue polypeptide: Pollen allergen Phl p 1 (263 aa).

The signal sequence occupies residues 1–23 (MASSSSVLLVVVLFAVFLGSAYG). Asn-32 carries an N-linked (GlcNAc...) asparagine glycan. The 107-residue stretch at 61 to 167 (GGACGYKDVD…RRVKCKYPEG (107 aa)) folds into the Expansin-like EG45 domain. 3 disulfides stabilise this stretch: Cys-64-Cys-92, Cys-95-Cys-162, and Cys-100-Cys-106. The Expansin-like CBD domain maps to 181–262 (NYLALLVKYV…GWKADTSYES (82 aa)).

It belongs to the expansin family. Expansin B subfamily. As to quaternary structure, homodimer.

It localises to the secreted. This chain is Pollen allergen Phl p 1 (PHLPI), found in Phleum pratense (Common timothy).